The chain runs to 130 residues: MIGEWNNGTGRRKSSVARVFIKKGTGKITINDRDIQVFFGRETSIMICRQPLFLTNHVETFDIMVNVHGGGESGQAGAVRHGITRALIDYDATLKPALSQAGFVTRDAREVERKKVGFRSARRRKQFSKR.

Belongs to the universal ribosomal protein uS9 family.

The chain is Small ribosomal subunit protein uS9 from Polaromonas sp. (strain JS666 / ATCC BAA-500).